Consider the following 418-residue polypeptide: Tektin-1 (418 aa).

4 coiled-coil regions span residues N20–E107, Q134–D177, N266–G308, and V332–I383.

It belongs to the tektin family. In terms of assembly, microtubule inner protein component of sperm flagellar doublet microtubules. Ubiquitinated, leading to its degradation. Deubiquitinated by USP16, promoting its stability. As to expression, predominantly expressed in testis.

Its subcellular location is the cytoplasm. The protein resides in the cytoskeleton. It localises to the cilium axoneme. It is found in the flagellum axoneme. Microtubule inner protein (MIP) part of the dynein-decorated doublet microtubules (DMTs) in cilia and flagellar axoneme. Forms filamentous polymers in the walls of ciliary and flagellar microtubules. The protein is Tektin-1 (Tekt1) of Rattus norvegicus (Rat).